A 274-amino-acid polypeptide reads, in one-letter code: Penicillin-insensitive murein endopeptidase (274 aa).

The signal sequence occupies residues 1-19 (MNKTAIALLALLASSASLA). Cystine bridges form between Cys44-Cys265, Cys187-Cys235, and Cys216-Cys223. The Zn(2+) site is built by His110, His113, Asp120, Asp147, His150, and His211. Positions 227 to 274 (PLPPPGDGCGAELQSWFEPPKPGTTKPEKKTPPPLPPSCQALLDEHVI) are disordered.

The protein belongs to the peptidase M74 family. As to quaternary structure, dimer. It depends on Zn(2+) as a cofactor.

Its subcellular location is the periplasm. Its function is as follows. Murein endopeptidase that cleaves the D-alanyl-meso-2,6-diamino-pimelyl amide bond that connects peptidoglycan strands. Likely plays a role in the removal of murein from the sacculus. This is Penicillin-insensitive murein endopeptidase from Escherichia coli (strain ATCC 8739 / DSM 1576 / NBRC 3972 / NCIMB 8545 / WDCM 00012 / Crooks).